Here is a 308-residue protein sequence, read N- to C-terminus: Methionyl-tRNA formyltransferase (308 aa).

A (6S)-5,6,7,8-tetrahydrofolate-binding site is contributed by 110–113; the sequence is SLLP.

Belongs to the Fmt family.

It catalyses the reaction L-methionyl-tRNA(fMet) + (6R)-10-formyltetrahydrofolate = N-formyl-L-methionyl-tRNA(fMet) + (6S)-5,6,7,8-tetrahydrofolate + H(+). Its function is as follows. Attaches a formyl group to the free amino group of methionyl-tRNA(fMet). The formyl group appears to play a dual role in the initiator identity of N-formylmethionyl-tRNA by promoting its recognition by IF2 and preventing the misappropriation of this tRNA by the elongation apparatus. The polypeptide is Methionyl-tRNA formyltransferase (Mycobacterium sp. (strain KMS)).